An 83-amino-acid polypeptide reads, in one-letter code: uncharacterized protein (83 aa).

This is an uncharacterized protein from Escherichia coli (Bacteriophage T4).